The chain runs to 92 residues: Muconolactone Delta-isomerase (92 aa).

This sequence belongs to the muconolactone Delta-isomerase family. Homodecamer.

The catalysed reaction is (S)-muconolactone = (4,5-dihydro-5-oxofuran-2-yl)-acetate. It functions in the pathway aromatic compound metabolism; beta-ketoadipate pathway; 5-oxo-4,5-dihydro-2-furylacetate from catechol: step 3/3. In Cupriavidus pinatubonensis (strain JMP 134 / LMG 1197) (Cupriavidus necator (strain JMP 134)), this protein is Muconolactone Delta-isomerase (catC).